The following is a 430-amino-acid chain: Cytochrome c biogenesis protein CcsB (430 aa).

3 helical membrane-spanning segments follow: residues 14-34 (LRLA…GTIL), 72-92 (SVWF…CSWR), and 162-182 (VGPL…AWGA).

This sequence belongs to the Ccs1/CcsB family. May interact with CcsA.

It is found in the cellular thylakoid membrane. In terms of biological role, required during biogenesis of c-type cytochromes (cytochrome c6 and cytochrome f) at the step of heme attachment. This Synechococcus sp. (strain WH7803) protein is Cytochrome c biogenesis protein CcsB.